A 357-amino-acid chain; its full sequence is Protein-glutamate methylesterase/protein-glutamine glutaminase (357 aa).

Residues 3-120 (RVIVVDDSAF…LASMDLAALS (118 aa)) form the Response regulatory domain. 4-aspartylphosphate is present on Asp54. In terms of domain architecture, CheB-type methylesterase spans 165–357 (ERSRRDIIAI…AERVASALYK (193 aa)). Active-site residues include Ser177, His204, and Asp300.

It belongs to the CheB family. Post-translationally, phosphorylated by CheA. Phosphorylation of the N-terminal regulatory domain activates the methylesterase activity.

Its subcellular location is the cytoplasm. It catalyses the reaction [protein]-L-glutamate 5-O-methyl ester + H2O = L-glutamyl-[protein] + methanol + H(+). The enzyme catalyses L-glutaminyl-[protein] + H2O = L-glutamyl-[protein] + NH4(+). Involved in chemotaxis. Part of a chemotaxis signal transduction system that modulates chemotaxis in response to various stimuli. Catalyzes the demethylation of specific methylglutamate residues introduced into the chemoreceptors (methyl-accepting chemotaxis proteins or MCP) by CheR. Also mediates the irreversible deamidation of specific glutamine residues to glutamic acid. The chain is Protein-glutamate methylesterase/protein-glutamine glutaminase from Lawsonia intracellularis (strain PHE/MN1-00).